The chain runs to 322 residues: Acetylglutamate kinase (322 aa).

Substrate contacts are provided by residues 89 to 90, Arg111, and Asn217; that span reads GG.

Belongs to the acetylglutamate kinase family. ArgB subfamily.

The protein resides in the cytoplasm. The enzyme catalyses N-acetyl-L-glutamate + ATP = N-acetyl-L-glutamyl 5-phosphate + ADP. It participates in amino-acid biosynthesis; L-arginine biosynthesis; N(2)-acetyl-L-ornithine from L-glutamate: step 2/4. In terms of biological role, catalyzes the ATP-dependent phosphorylation of N-acetyl-L-glutamate. This chain is Acetylglutamate kinase, found in Ehrlichia ruminantium (strain Gardel).